The primary structure comprises 49 residues: Large ribosomal subunit protein bL33 (49 aa).

This sequence belongs to the bacterial ribosomal protein bL33 family.

This chain is Large ribosomal subunit protein bL33, found in Desulfitobacterium hafniense (strain Y51).